A 764-amino-acid polypeptide reads, in one-letter code: Molybdenum cofactor sulfurase 1 (764 aa).

K228 is modified (N6-(pyridoxal phosphate)lysine). The active site involves C394. The MOSC domain occupies L607–L762.

It belongs to the class-V pyridoxal-phosphate-dependent aminotransferase family. MOCOS subfamily. Requires pyridoxal 5'-phosphate as cofactor.

The enzyme catalyses Mo-molybdopterin + L-cysteine + AH2 = thio-Mo-molybdopterin + L-alanine + A + H2O. Functionally, sulfurates the molybdenum cofactor. Sulfation of molybdenum is essential for xanthine dehydrogenase (XDH) and aldehyde oxidase (ADO) enzymes in which molybdenum cofactor is liganded by 1 oxygen and 1 sulfur atom in active form. This chain is Molybdenum cofactor sulfurase 1, found in Aedes aegypti (Yellowfever mosquito).